The chain runs to 437 residues: Protein translocase subunit SecY (437 aa).

A run of 10 helical transmembrane segments spans residues 19 to 39 (LFTL…IPGV), 69 to 89 (LLQI…SIIL), 122 to 142 (VALA…GALF), 157 to 177 (IFTT…VMWL), 189 to 209 (GMSI…LWSI), 219 to 239 (WIEF…VVFV), 275 to 295 (GIIP…VVQF), 318 to 338 (HITV…AISF), 378 to 398 (GSLY…PLGA), and 400 to 420 (QNFP…LETV).

This sequence belongs to the SecY/SEC61-alpha family. In terms of assembly, component of the Sec protein translocase complex. Heterotrimer consisting of SecY, SecE and SecG subunits. The heterotrimers can form oligomers, although 1 heterotrimer is thought to be able to translocate proteins. Interacts with the ribosome. Interacts with SecDF, and other proteins may be involved. Interacts with SecA.

The protein resides in the cell membrane. The central subunit of the protein translocation channel SecYEG. Consists of two halves formed by TMs 1-5 and 6-10. These two domains form a lateral gate at the front which open onto the bilayer between TMs 2 and 7, and are clamped together by SecE at the back. The channel is closed by both a pore ring composed of hydrophobic SecY resides and a short helix (helix 2A) on the extracellular side of the membrane which forms a plug. The plug probably moves laterally to allow the channel to open. The ring and the pore may move independently. This is Protein translocase subunit SecY from Streptomyces scabiei.